We begin with the raw amino-acid sequence, 170 residues long: RNA pyrophosphohydrolase (170 aa).

Residues 6 to 149 form the Nudix hydrolase domain; that stretch reads GFRPNVGIIL…KRDVYRRALK (144 aa). The short motif at 39–60 is the Nudix box element; that stretch reads GGIKHNESPENALYRELEEEVG.

This sequence belongs to the Nudix hydrolase family. RppH subfamily. It depends on a divalent metal cation as a cofactor.

Accelerates the degradation of transcripts by removing pyrophosphate from the 5'-end of triphosphorylated RNA, leading to a more labile monophosphorylated state that can stimulate subsequent ribonuclease cleavage. The polypeptide is RNA pyrophosphohydrolase (Saccharophagus degradans (strain 2-40 / ATCC 43961 / DSM 17024)).